Reading from the N-terminus, the 424-residue chain is Histidinol dehydrogenase (424 aa).

NAD(+) is bound by residues Y121, Q183, and N206. The substrate site is built by S229, Q251, and H254. Q251 and H254 together coordinate Zn(2+). Residues E319 and H320 each act as proton acceptor in the active site. Substrate contacts are provided by H320, D353, E407, and H412. A Zn(2+)-binding site is contributed by D353. H412 contacts Zn(2+).

The protein belongs to the histidinol dehydrogenase family. Requires Zn(2+) as cofactor.

It catalyses the reaction L-histidinol + 2 NAD(+) + H2O = L-histidine + 2 NADH + 3 H(+). The protein operates within amino-acid biosynthesis; L-histidine biosynthesis; L-histidine from 5-phospho-alpha-D-ribose 1-diphosphate: step 9/9. In terms of biological role, catalyzes the sequential NAD-dependent oxidations of L-histidinol to L-histidinaldehyde and then to L-histidine. The polypeptide is Histidinol dehydrogenase (Halalkalibacterium halodurans (strain ATCC BAA-125 / DSM 18197 / FERM 7344 / JCM 9153 / C-125) (Bacillus halodurans)).